The sequence spans 928 residues: Protein Niban 1 (928 aa).

The N-myristoyl glycine moiety is linked to residue G2. A phosphoserine mark is found at S579, S582, S596, S602, and S646. Residues 580–596 (VSSLTDLKPPTGSNQAS) are compositionally biased toward polar residues. A disordered region spans residues 580–600 (VSSLTDLKPPTGSNQASPARR). Disordered stretches follow at residues 618–654 (VFQESEEEKQPEVPSSLAKGESLSLPGPSPPPDGTEQ) and 669–707 (ATEDTAGLPGTCSSELEFGGTLEDEEPAQEEPEPITASG). The span at 690 to 701 (LEDEEPAQEEPE) shows a compositional bias: acidic residues. S708 is modified (phosphoserine). Disordered stretches follow at residues 723-877 (PVDS…ATAS) and 899-928 (PNPDVLLSHKDDVKEGEGGQESFPELPSEE). Over residues 801–818 (GGLTEEPLGPMEGELPGE) the composition is skewed to low complexity. Residues 825 to 834 (HEGRGGKCTE) show a composition bias toward basic and acidic residues. The segment covering 865-877 (MGGQSSAAQATAS) has biased composition (low complexity). A compositionally biased stretch (basic and acidic residues) spans 905–915 (LSHKDDVKEGE). Position 926 is a phosphoserine (S926).

It belongs to the Niban family. Expressed in various types of thyroid tumor such as papillary thyroid carcinomas and oxyphilic thyroid tumors but not in normal thyroid tissue (at protein level). Strongly expressed in heart, skeletal muscle, pancreas, white blood cells and prostate with moderate expression in colon and spleen. Expressed in renal carcinoma cells but not in normal kidney.

It localises to the cytoplasm. The protein localises to the membrane. In terms of biological role, regulates phosphorylation of a number of proteins involved in translation regulation including EIF2A, EIF4EBP1 and RPS6KB1. May be involved in the endoplasmic reticulum stress response. The sequence is that of Protein Niban 1 from Homo sapiens (Human).